A 417-amino-acid chain; its full sequence is uncharacterized protein (417 aa).

A disordered region spans residues 1 to 24 (MSQPPINPLGQPQVPAAASPSGQP). Helical transmembrane passes span 54–74 (VYDT…LLTA), 79–99 (LMLY…TLLI), 117–137 (AIVV…GAFV), and 143–163 (MLVF…LYFM). Positions 211 to 228 (DLSASARMEEHEASQRQD) are enriched in basic and acidic residues. Disordered stretches follow at residues 211 to 283 (DLSA…FKDD) and 308 to 417 (IMPA…RKNK). Polar residues predominate over residues 312–322 (SSRSPNFSTGT). Residues 336–347 (EPSIPRVSSSSR) show a composition bias toward low complexity. Positions 391–401 (STANLSPSNPF) are enriched in polar residues.

It belongs to the chlamydial CPn_0443/CT_005/TC_0273 family.

Its subcellular location is the cell membrane. This is an uncharacterized protein from Chlamydia pneumoniae (Chlamydophila pneumoniae).